A 471-amino-acid polypeptide reads, in one-letter code: ATP synthase subunit beta (471 aa).

153–160 (GGAGVGKT) provides a ligand contact to ATP.

This sequence belongs to the ATPase alpha/beta chains family. In terms of assembly, F-type ATPases have 2 components, CF(1) - the catalytic core - and CF(0) - the membrane proton channel. CF(1) has five subunits: alpha(3), beta(3), gamma(1), delta(1), epsilon(1). CF(0) has four main subunits: a(1), b(1), b'(1) and c(9-12).

The protein resides in the cell membrane. It catalyses the reaction ATP + H2O + 4 H(+)(in) = ADP + phosphate + 5 H(+)(out). Produces ATP from ADP in the presence of a proton gradient across the membrane. The catalytic sites are hosted primarily by the beta subunits. The polypeptide is ATP synthase subunit beta (Roseiflexus castenholzii (strain DSM 13941 / HLO8)).